Here is a 304-residue protein sequence, read N- to C-terminus: Putative S-adenosyl-L-methionine-dependent methyltransferase MSMEG_1482/MSMEI_1446 (304 aa).

S-adenosyl-L-methionine contacts are provided by residues Asp-130 and 159 to 160; that span reads DL.

This sequence belongs to the UPF0677 family.

Functionally, exhibits S-adenosyl-L-methionine-dependent methyltransferase activity. The protein is Putative S-adenosyl-L-methionine-dependent methyltransferase MSMEG_1482/MSMEI_1446 of Mycolicibacterium smegmatis (strain ATCC 700084 / mc(2)155) (Mycobacterium smegmatis).